A 251-amino-acid chain; its full sequence is PF03932 family protein CutC (251 aa).

Belongs to the CutC family.

It is found in the cytoplasm. The protein is PF03932 family protein CutC of Bacteroides fragilis (strain ATCC 25285 / DSM 2151 / CCUG 4856 / JCM 11019 / LMG 10263 / NCTC 9343 / Onslow / VPI 2553 / EN-2).